The primary structure comprises 275 residues: Ribosomal RNA small subunit methyltransferase A (275 aa).

Asparagine 19, leucine 21, glycine 46, glutamate 71, aspartate 94, and asparagine 117 together coordinate S-adenosyl-L-methionine.

The protein belongs to the class I-like SAM-binding methyltransferase superfamily. rRNA adenine N(6)-methyltransferase family. RsmA subfamily.

It localises to the cytoplasm. The enzyme catalyses adenosine(1518)/adenosine(1519) in 16S rRNA + 4 S-adenosyl-L-methionine = N(6)-dimethyladenosine(1518)/N(6)-dimethyladenosine(1519) in 16S rRNA + 4 S-adenosyl-L-homocysteine + 4 H(+). Its function is as follows. Specifically dimethylates two adjacent adenosines (A1518 and A1519) in the loop of a conserved hairpin near the 3'-end of 16S rRNA in the 30S particle. May play a critical role in biogenesis of 30S subunits. This is Ribosomal RNA small subunit methyltransferase A from Burkholderia orbicola (strain MC0-3).